A 198-amino-acid chain; its full sequence is Dephospho-CoA kinase (198 aa).

The 195-residue stretch at Phe-4–Arg-198 folds into the DPCK domain. Ala-12–Thr-17 lines the ATP pocket.

Belongs to the CoaE family.

The protein localises to the cytoplasm. The enzyme catalyses 3'-dephospho-CoA + ATP = ADP + CoA + H(+). The protein operates within cofactor biosynthesis; coenzyme A biosynthesis; CoA from (R)-pantothenate: step 5/5. Functionally, catalyzes the phosphorylation of the 3'-hydroxyl group of dephosphocoenzyme A to form coenzyme A. The polypeptide is Dephospho-CoA kinase (Lactobacillus johnsonii (strain CNCM I-12250 / La1 / NCC 533)).